A 505-amino-acid polypeptide reads, in one-letter code: Calcium/calmodulin-dependent protein kinase kinase 1 (505 aa).

The disordered stretch occupies residues 26-61; that stretch reads THLEEADGGPEPTRNGVDPPPRARAASVIPGSTSRL. Ser-67 and Ser-74 each carry phosphoserine. Arg-78 bears the Asymmetric dimethylarginine mark. Residue Ser-100 is modified to Phosphoserine. Position 108 is a phosphothreonine (Thr-108). Positions 128–409 constitute a Protein kinase domain; the sequence is YKLQSEIGKG…VPDIKLHPWV (282 aa). Residues 134 to 142 and Lys-157 each bind ATP; that span reads IGKGAYGVV. The tract at residues 167-189 is RP domain; it reads QYGFPRRPPPRGSQAAQGGPAKQ. Asp-275 (proton acceptor) is an active-site residue. Residues 435–440 are autoinhibitory domain; the sequence is KNSVRL. A calmodulin-binding region spans residues 438 to 463; that stretch reads VRLIPSWTTVILVKSMLRKRSFGNPF. 3 positions are modified to phosphoserine: Ser-458, Ser-475, and Ser-492. Residues 460–505 form a disordered region; it reads GNPFEPQARREERSMSAPGNLLVKEGFGEGGKSPELPGVQEDEAAS.

The protein belongs to the protein kinase superfamily. Ser/Thr protein kinase family. As to quaternary structure, interacts with CAMK4 and calmodulin. In terms of processing, appears to be autophosphorylated in a Ca(2+)/calmodulin-dependent manner. Phosphorylated at multiple sites by PRCAKA/PKA. Phosphorylation of Ser-458 is blocked upon binding to Ca(2+)/calmodulin. In vitro, phosphorylated by CAMK1 and CAMK4.

It localises to the cytoplasm. The protein localises to the nucleus. It catalyses the reaction L-seryl-[protein] + ATP = O-phospho-L-seryl-[protein] + ADP + H(+). It carries out the reaction L-threonyl-[protein] + ATP = O-phospho-L-threonyl-[protein] + ADP + H(+). Activated by Ca(2+)/calmodulin. Binding of calmodulin may relieve intrasteric autoinhibition. Partially inhibited upon phosphorylation by PRCAKA/PKA. May be regulated through phosphorylation by CAMK1 and CAMK4. Calcium/calmodulin-dependent protein kinase that belongs to a proposed calcium-triggered signaling cascade involved in a number of cellular processes. Phosphorylates CAMK1, CAMK1D, CAMK1G and CAMK4. Involved in regulating cell apoptosis. Promotes cell survival by phosphorylating AKT1/PKB that inhibits pro-apoptotic BAD/Bcl2-antagonist of cell death. This is Calcium/calmodulin-dependent protein kinase kinase 1 (CAMKK1) from Homo sapiens (Human).